The following is a 142-amino-acid chain: 3-hydroxyacyl-[acyl-carrier-protein] dehydratase FabZ (142 aa).

H48 is a catalytic residue.

The protein belongs to the thioester dehydratase family. FabZ subfamily.

It localises to the cytoplasm. The catalysed reaction is a (3R)-hydroxyacyl-[ACP] = a (2E)-enoyl-[ACP] + H2O. Its function is as follows. Involved in unsaturated fatty acids biosynthesis. Catalyzes the dehydration of short chain beta-hydroxyacyl-ACPs and long chain saturated and unsaturated beta-hydroxyacyl-ACPs. The protein is 3-hydroxyacyl-[acyl-carrier-protein] dehydratase FabZ of Ruminiclostridium cellulolyticum (strain ATCC 35319 / DSM 5812 / JCM 6584 / H10) (Clostridium cellulolyticum).